The primary structure comprises 264 residues: MNKDVLQGQSIIRYEEGQLIQTTDSYVTEFPLTINVNGTEFATVICSPTHMEELVVGFLASEGAIYKKEEIKSLQIDDSKGFAHVELTKDLGDRFEYSTKRMIASCCGKSREFYFHNDAAIAKTSMSKITLTPKQVLNMMTGLQTASTLFKQTGGLHNAAISDGDEFFEHRQDIGRHNALDKLYGFCLERRIPVRNKVLIFSGRISSEILLKAAKIGVGVILSKSAPTTLAITLANDLNITAIGFIRDGSFNIYSHPERIKATE.

Cys107 (cysteine persulfide intermediate) is an active-site residue.

Belongs to the FdhD family.

It localises to the cytoplasm. In terms of biological role, required for formate dehydrogenase (FDH) activity. Acts as a sulfur carrier protein that transfers sulfur from IscS to the molybdenum cofactor prior to its insertion into FDH. In Staphylococcus haemolyticus (strain JCSC1435), this protein is Sulfur carrier protein FdhD.